The chain runs to 2078 residues: Autophagy-related protein 2 homolog B (2078 aa).

The Chorein N-terminal domain maps to 13–108 (ACRYLLQRYL…EMVFRPRPRP (96 aa)). Ser-255 and Ser-379 each carry phosphoserine. Positions 473-495 (GSTFPSNLVHPTPLQKTSLPSRS) are disordered. The segment covering 486 to 495 (LQKTSLPSRS) has biased composition (polar residues). Phosphoserine occurs at positions 497, 840, 886, 899, and 1008. The interval 868-888 (EEEENDGHYQEEEEGGAHSLK) is disordered. Residues 873-888 (DGHYQEEEEGGAHSLK) are compositionally biased toward basic and acidic residues. A Phosphotyrosine modification is found at Tyr-1012. Residues Ser-1016 and Ser-1018 each carry the phosphoserine modification. Thr-1022 is subject to Phosphothreonine. A disordered region spans residues 1375–1405 (ADMKPGAFQRRSKVDSSGRSSSRGPVLPEAD). A Phosphoserine modification is found at Ser-1526.

Belongs to the ATG2 family. In terms of assembly, interacts with WDR45/WIPI4.

It localises to the preautophagosomal structure membrane. Its subcellular location is the lipid droplet. It is found in the endoplasmic reticulum membrane. It catalyses the reaction a 1,2-diacyl-sn-glycero-3-phospho-L-serine(in) = a 1,2-diacyl-sn-glycero-3-phospho-L-serine(out). It carries out the reaction a 1,2-diacyl-sn-glycero-3-phosphoethanolamine(in) = a 1,2-diacyl-sn-glycero-3-phosphoethanolamine(out). In terms of biological role, lipid transfer protein required for both autophagosome formation and regulation of lipid droplet morphology and dispersion. Tethers the edge of the isolation membrane (IM) to the endoplasmic reticulum (ER) and mediates direct lipid transfer from ER to IM for IM expansion. Binds to the ER exit site (ERES), which is the membrane source for autophagosome formation, and extracts phospholipids from the membrane source and transfers them to ATG9 (ATG9A or ATG9B) to the IM for membrane expansion. Lipid transfer activity is enhanced by WDR45/WIPI4, which promotes ATG2B-association with phosphatidylinositol 3-monophosphate (PI3P)-containing membranes. The sequence is that of Autophagy-related protein 2 homolog B from Homo sapiens (Human).